A 145-amino-acid chain; its full sequence is Lymphocyte antigen 6 complex locus protein G5c (145 aa).

Positions 1-38 (MSGLAASWSLKPLGPHGVTQALCAVLLAVLVTMNVVLG) are cleaved as a signal peptide. The UPAR/Ly6 domain occupies 55-145 (LHCYRCLLET…NPKNRKNTMH (91 aa)). Cystine bridges form between C57-C84, C60-C69, C76-C102, C111-C128, and C129-C134. N91 carries an N-linked (GlcNAc...) asparagine glycan.

As to quaternary structure, forms oligomers. N-glycosylated. Expression restricted to the caput of epididymis. Detected only from day 24 postnatum.

The protein resides in the secreted. Its function is as follows. May have a role in hematopoietic cell differentiation. This chain is Lymphocyte antigen 6 complex locus protein G5c (Ly6g5c), found in Rattus norvegicus (Rat).